We begin with the raw amino-acid sequence, 346 residues long: Biotin synthase (346 aa).

Residues 38–256 form the Radical SAM core domain; it reads RQVQVSTLLS…IAVARIMMPT (219 aa). C53, C57, and C60 together coordinate [4Fe-4S] cluster. C97, C128, C188, and R260 together coordinate [2Fe-2S] cluster.

It belongs to the radical SAM superfamily. Biotin synthase family. In terms of assembly, homodimer. [4Fe-4S] cluster serves as cofactor. It depends on [2Fe-2S] cluster as a cofactor.

It carries out the reaction (4R,5S)-dethiobiotin + (sulfur carrier)-SH + 2 reduced [2Fe-2S]-[ferredoxin] + 2 S-adenosyl-L-methionine = (sulfur carrier)-H + biotin + 2 5'-deoxyadenosine + 2 L-methionine + 2 oxidized [2Fe-2S]-[ferredoxin]. It functions in the pathway cofactor biosynthesis; biotin biosynthesis; biotin from 7,8-diaminononanoate: step 2/2. In terms of biological role, catalyzes the conversion of dethiobiotin (DTB) to biotin by the insertion of a sulfur atom into dethiobiotin via a radical-based mechanism. In Escherichia fergusonii (strain ATCC 35469 / DSM 13698 / CCUG 18766 / IAM 14443 / JCM 21226 / LMG 7866 / NBRC 102419 / NCTC 12128 / CDC 0568-73), this protein is Biotin synthase.